We begin with the raw amino-acid sequence, 131 residues long: Hypocretin neuropeptide precursor (131 aa).

The first 33 residues, 1–33 (MNPPFAKVSWATVTLLLLLLLLPPAVLSPGAAA), serve as a signal peptide directing secretion. Residue Gln-34 is modified to Pyrrolidone carboxylic acid. Intrachain disulfides connect Cys-39–Cys-45 and Cys-40–Cys-47. Leu-66 is subject to Leucine amide. At Met-97 the chain carries Methionine amide. The propeptide at 98–131 (GRRAGAEPAPRLCPGRRCLAAAASSVAPGGRSGI) is removed in mature form.

Belongs to the orexin family. Post-translationally, specific enzymatic cleavages at paired basic residues yield the different active peptides.

It is found in the rough endoplasmic reticulum. The protein resides in the cytoplasmic vesicle. Its subcellular location is the synapse. In terms of biological role, neuropeptides that play a significant role in the regulation of food intake and sleep-wakefulness, possibly by coordinating the complex behavioral and physiologic responses of these complementary homeostatic functions. A broader role in the homeostatic regulation of energy metabolism, autonomic function, hormonal balance and the regulation of body fluids, is also suggested. Binds to orexin receptors HCRTR1/OX1R and HCRTR2/OX2R with a high affinity. Stimulates food intake. Modulates pituitary luteinizing hormone secretion in an ovarian steroid-dependent manner. Functionally, binds to orexin receptor HCRTR2/OX2R only. Stimulates food intake. Modulates pituitary luteinizing hormone secretion in an ovarian steroid-dependent manner. In Sus scrofa (Pig), this protein is Hypocretin neuropeptide precursor (HCRT).